Consider the following 236-residue polypeptide: MVVINKQLMVSGILPAWLKNEYDLEDKIISTVGAGRIGYRVLERLVAFNPKKLLYYDYQELPAEAINRLNEASKLFNGRGDIVQRVEKLEDMVAQSDVVTINCPLHKDSRGLFNKKLISHMKDGAYLVNTARGAICVAEDVAEAVKSGKLAGYGGDVWDKQPAPKDHPWRTMDNKDHVGNAMTVHISGTSLHAQKRYAQGVKNILNSYFSKKFDYRPQDIIVQNGSYATRAYGQKK.

Residues 36-37, Asp57, 104-108, Thr130, Asp156, and 185-188 each bind NAD(+); these read RI, PLHKD, and HISG.

Belongs to the D-isomer specific 2-hydroxyacid dehydrogenase family. FDH subfamily.

The sequence is that of Truncated formate dehydrogenase 2 from Saccharomyces cerevisiae (strain ATCC 204508 / S288c) (Baker's yeast).